An 88-amino-acid polypeptide reads, in one-letter code: Large ribosomal subunit protein bL27 (88 aa).

Positions 1–23 are disordered; the sequence is MAHKKGTGSTRNGRDSNSKRLGV.

Belongs to the bacterial ribosomal protein bL27 family.

This chain is Large ribosomal subunit protein bL27, found in Synechococcus sp. (strain CC9902).